Reading from the N-terminus, the 340-residue chain is Lipase chaperone (340 aa).

The helical transmembrane segment at 4-24 (ILLLIPLAFAASLAWFVWLEP) threads the bilayer. The segment at 29-51 (ETAPPASPQAGADRAPPAASAGE) is disordered. Residues 36-51 (PQAGADRAPPAASAGE) are compositionally biased toward low complexity.

This sequence belongs to the lipase chaperone family.

It is found in the cell inner membrane. In terms of biological role, may be involved in the folding of the extracellular lipase during its passage through the periplasm. This Pseudomonas aeruginosa (strain ATCC 15692 / DSM 22644 / CIP 104116 / JCM 14847 / LMG 12228 / 1C / PRS 101 / PAO1) protein is Lipase chaperone (lifO).